The sequence spans 187 residues: Large ribosomal subunit protein uL5 (187 aa).

Belongs to the universal ribosomal protein uL5 family. In terms of assembly, part of the 50S ribosomal subunit; part of the 5S rRNA/L5/L18/L25 subcomplex. Contacts the 5S rRNA and the P site tRNA. Forms a bridge to the 30S subunit in the 70S ribosome.

Functionally, this is one of the proteins that bind and probably mediate the attachment of the 5S RNA into the large ribosomal subunit, where it forms part of the central protuberance. In the 70S ribosome it contacts protein S13 of the 30S subunit (bridge B1b), connecting the 2 subunits; this bridge is implicated in subunit movement. Contacts the P site tRNA; the 5S rRNA and some of its associated proteins might help stabilize positioning of ribosome-bound tRNAs. The polypeptide is Large ribosomal subunit protein uL5 (Mycobacterium avium (strain 104)).